Consider the following 101-residue polypeptide: Protein Tat (101 aa).

Basic and acidic residues predominate over residues 1 to 12; the sequence is MDPVDPRLEPWK. The disordered stretch occupies residues 1–20; sequence MDPVDPRLEPWKHPGSQPKA. Positions 1-24 are interaction with human CREBBP; the sequence is MDPVDPRLEPWKHPGSQPKAACTS. A transactivation region spans residues 1-48; that stretch reads MDPVDPRLEPWKHPGSQPKAACTSCYCKKCCFHCQVCFTTKGLGISYG. Residues cysteine 22, cysteine 25, and cysteine 27 each contribute to the Zn(2+) site. A cysteine-rich region spans residues 22 to 37; sequence CTSCYCKKCCFHCQVC. Lysine 28 carries the post-translational modification N6-acetyllysine; by host PCAF. Cysteine 30, histidine 33, cysteine 34, and cysteine 37 together coordinate Zn(2+). The segment at 38 to 48 is core; it reads FTTKGLGISYG. Basic residues predominate over residues 48 to 57; it reads GRKKRRQRRR. Residues 48-101 form a disordered region; it reads GRKKRRQRRRAPQDSQTHQVSLPKQPASQARGDPTGPKESKKKVERETETDPVD. Positions 49–57 match the Nuclear localization signal, RNA-binding (TAR), and protein transduction motif; it reads RKKRRQRRR. Residues 49–86 are interaction with the host capping enzyme RNGTT; that stretch reads RKKRRQRRRAPQDSQTHQVSLPKQPASQARGDPTGPKE. Lysine 50 and lysine 51 each carry N6-acetyllysine; by host EP300 and GCN5L2. Asymmetric dimethylarginine; by host PRMT6 occurs at positions 52 and 53. Residues 60 to 75 show a composition bias toward polar residues; the sequence is QDSQTHQVSLPKQPAS. Residue lysine 71 forms a Glycyl lysine isopeptide (Lys-Gly) (interchain with G-Cter in ubiquitin) linkage. The Cell attachment site motif lies at 78–80; sequence RGD. Residues 83 to 101 are compositionally biased toward basic and acidic residues; that stretch reads GPKESKKKVERETETDPVD.

This sequence belongs to the lentiviruses Tat family. As to quaternary structure, interacts with host CCNT1. Associates with the P-TEFb complex composed at least of Tat, P-TEFb (CDK9 and CCNT1), TAR RNA, RNA Pol II. Recruits the HATs CREBBP, TAF1/TFIID, EP300, PCAF and GCN5L2. Interacts with host KAT5/Tip60; this interaction targets the latter to degradation. Interacts with the host deacetylase SIRT1. Interacts with host capping enzyme RNGTT; this interaction stimulates RNGTT. Binds to host KDR, and to the host integrins ITGAV/ITGB3 and ITGA5/ITGB1. Interacts with host KPNB1/importin beta-1 without previous binding to KPNA1/importin alpha-1. Interacts with EIF2AK2. Interacts with host nucleosome assembly protein NAP1L1; this interaction may be required for the transport of Tat within the nucleus, since the two proteins interact at the nuclear rim. Interacts with host C1QBP/SF2P32; this interaction involves lysine-acetylated Tat. Interacts with the host chemokine receptors CCR2, CCR3 and CXCR4. Interacts with host DPP4/CD26; this interaction may trigger an anti-proliferative effect. Interacts with host LDLR. Interacts with the host extracellular matrix metalloproteinase MMP1. Interacts with host PRMT6; this interaction mediates Tat's methylation. Interacts with, and is ubiquitinated by MDM2/Hdm2. Interacts with host PSMC3 and HTATIP2. Interacts with STAB1; this interaction may overcome SATB1-mediated repression of IL2 and IL2RA (interleukin) in T cells by binding to the same domain than HDAC1. Interacts (when acetylated) with human CDK13, thereby increasing HIV-1 mRNA splicing and promoting the production of the doubly spliced HIV-1 protein Nef. Interacts with host TBP; this interaction modulates the activity of transcriptional pre-initiation complex. Interacts with host RELA. Interacts with host PLSCR1; this interaction negatively regulates Tat transactivation activity by altering its subcellular distribution. In terms of processing, asymmetrical arginine methylation by host PRMT6 seems to diminish the transactivation capacity of Tat and affects the interaction with host CCNT1. Post-translationally, acetylation by EP300, CREBBP, GCN5L2/GCN5 and PCAF regulates the transactivation activity of Tat. EP300-mediated acetylation of Lys-50 promotes dissociation of Tat from the TAR RNA through the competitive binding to PCAF's bromodomain. In addition, the non-acetylated Tat's N-terminus can also interact with PCAF. PCAF-mediated acetylation of Lys-28 enhances Tat's binding to CCNT1. Lys-50 is deacetylated by SIRT1. Polyubiquitination by host MDM2 does not target Tat to degradation, but activates its transactivation function and fosters interaction with CCNT1 and TAR RNA. In terms of processing, phosphorylated by EIF2AK2 on serine and threonine residues adjacent to the basic region important for TAR RNA binding and function. Phosphorylation of Tat by EIF2AK2 is dependent on the prior activation of EIF2AK2 by dsRNA.

Its subcellular location is the host nucleus. The protein localises to the host nucleolus. It localises to the host cytoplasm. The protein resides in the secreted. Transcriptional activator that increases RNA Pol II processivity, thereby increasing the level of full-length viral transcripts. Recognizes a hairpin structure at the 5'-LTR of the nascent viral mRNAs referred to as the transactivation responsive RNA element (TAR) and recruits the cyclin T1-CDK9 complex (P-TEFb complex) that will in turn hyperphosphorylate the RNA polymerase II to allow efficient elongation. The CDK9 component of P-TEFb and other Tat-activated kinases hyperphosphorylate the C-terminus of RNA Pol II that becomes stabilized and much more processive. Other factors such as HTATSF1/Tat-SF1, SUPT5H/SPT5, and HTATIP2 are also important for Tat's function. Besides its effect on RNA Pol II processivity, Tat induces chromatin remodeling of proviral genes by recruiting the histone acetyltransferases (HATs) CREBBP, EP300 and PCAF to the chromatin. This also contributes to the increase in proviral transcription rate, especially when the provirus integrates in transcriptionally silent region of the host genome. To ensure maximal activation of the LTR, Tat mediates nuclear translocation of NF-kappa-B by interacting with host RELA. Through its interaction with host TBP, Tat may also modulate transcription initiation. Tat can reactivate a latently infected cell by penetrating in it and transactivating its LTR promoter. In the cytoplasm, Tat is thought to act as a translational activator of HIV-1 mRNAs. In terms of biological role, extracellular circulating Tat can be endocytosed by surrounding uninfected cells via the binding to several surface receptors such as CD26, CXCR4, heparan sulfate proteoglycans (HSPG) or LDLR. Neurons are rarely infected, but they internalize Tat via their LDLR. Through its interaction with nuclear HATs, Tat is potentially able to control the acetylation-dependent cellular gene expression. Modulates the expression of many cellular genes involved in cell survival, proliferation or in coding for cytokines or cytokine receptors. Tat plays a role in T-cell and neurons apoptosis. Tat induced neurotoxicity and apoptosis probably contribute to neuroAIDS. Circulating Tat also acts as a chemokine-like and/or growth factor-like molecule that binds to specific receptors on the surface of the cells, affecting many cellular pathways. In the vascular system, Tat binds to ITGAV/ITGB3 and ITGA5/ITGB1 integrins dimers at the surface of endothelial cells and competes with bFGF for heparin-binding sites, leading to an excess of soluble bFGF. This chain is Protein Tat, found in Homo sapiens (Human).